The following is a 561-amino-acid chain: Glucose-6-phosphate isomerase (561 aa).

E366 acts as the Proton donor in catalysis. Active-site residues include H397 and K525.

Belongs to the GPI family.

It localises to the cytoplasm. The enzyme catalyses alpha-D-glucose 6-phosphate = beta-D-fructose 6-phosphate. Its pathway is carbohydrate degradation; glycolysis; D-glyceraldehyde 3-phosphate and glycerone phosphate from D-glucose: step 2/4. The protein is Glucose-6-phosphate isomerase (gpi) of Dictyostelium discoideum (Social amoeba).